The primary structure comprises 188 residues: Archaemetzincin (188 aa).

Histidine 137 is a binding site for Zn(2+). Residue glutamate 138 is the Proton acceptor of the active site. Positions 141, 147, 148, 153, 172, and 175 each coordinate Zn(2+).

Belongs to the peptidase M54 family. In terms of assembly, monomer. Requires Zn(2+) as cofactor.

Its function is as follows. Probable zinc metalloprotease whose natural substrate is unknown. The polypeptide is Archaemetzincin (Pyrococcus abyssi (strain GE5 / Orsay)).